Consider the following 206-residue polypeptide: Large ribosomal subunit protein uL4 (206 aa).

The segment at 63–85 (MYKQKGTGSARHGSARAPQFRGG) is disordered.

Belongs to the universal ribosomal protein uL4 family. In terms of assembly, part of the 50S ribosomal subunit.

One of the primary rRNA binding proteins, this protein initially binds near the 5'-end of the 23S rRNA. It is important during the early stages of 50S assembly. It makes multiple contacts with different domains of the 23S rRNA in the assembled 50S subunit and ribosome. In terms of biological role, forms part of the polypeptide exit tunnel. This is Large ribosomal subunit protein uL4 from Beijerinckia indica subsp. indica (strain ATCC 9039 / DSM 1715 / NCIMB 8712).